The sequence spans 196 residues: MVKIGVLGLQGAVREHVKAIEASGAEAVVVKQVEQLQEIDGLILPGGESTTMRRLIDKYHFMEPLREFARSRKPMFGTCAGMILLANKLIGYEEAHIGAMDITVERNAFGRQKDSFEATLSIKGVGEDFTGVFIRAPYVVDIADDVEVLSMHNGRMVAVKQGPFLAASFHPELTDDYRVTAYFVEMVEEAKMKKVV.

Position 47–49 (47–49 (GES)) interacts with L-glutamine. Cysteine 79 (nucleophile) is an active-site residue. L-glutamine contacts are provided by residues arginine 106 and 134-135 (IR). Residues histidine 170 and glutamate 172 each act as charge relay system in the active site.

It belongs to the glutaminase PdxT/SNO family. In terms of assembly, in the presence of PdxS, forms a dodecamer of heterodimers. Only shows activity in the heterodimer.

The enzyme catalyses aldehydo-D-ribose 5-phosphate + D-glyceraldehyde 3-phosphate + L-glutamine = pyridoxal 5'-phosphate + L-glutamate + phosphate + 3 H2O + H(+). It catalyses the reaction L-glutamine + H2O = L-glutamate + NH4(+). The protein operates within cofactor biosynthesis; pyridoxal 5'-phosphate biosynthesis. Functionally, catalyzes the hydrolysis of glutamine to glutamate and ammonia as part of the biosynthesis of pyridoxal 5'-phosphate. The resulting ammonia molecule is channeled to the active site of PdxS. The protein is Pyridoxal 5'-phosphate synthase subunit PdxT of Bacillus cytotoxicus (strain DSM 22905 / CIP 110041 / 391-98 / NVH 391-98).